The following is a 50-amino-acid chain: Putative protein HokF (50 aa).

Residues 5–25 (YALVAVIVLCLTVPGFTLLVG) form a helical membrane-spanning segment.

This sequence belongs to the Hok/Gef family.

Its subcellular location is the cell inner membrane. In terms of biological role, toxic component of a type I toxin-antitoxin (TA) system. When overexpressed kills cells within minutes; causes collapse of the transmembrane potential and arrest of respiration. Its toxic effect is probably neutralized by an antisense antitoxin Sok RNA. In Escherichia coli O157:H7, this protein is Putative protein HokF (hokF).